Consider the following 218-residue polypeptide: Dynein axonemal assembly factor 6 (218 aa).

Positions 66–103 (MGPGNIGPPKAKESKAIPEPRSDESENIWNPEEVPEGA) are disordered. Over residues 75-89 (KAKESKAIPEPRSDE) the composition is skewed to basic and acidic residues.

It belongs to the PIH1 family. As to quaternary structure, interacts with HSPA1A/B, HSP90AA1 and DNAI2. Interacts with DNAAF2 and DNAAF4. Specifically expressed in testis. Detected in pachytene spermatocytes from 5 weeks of age and in pachytene and diplotene spermatocytes of adult mice. Not detected in spermatids or mature sperm.

The protein resides in the cytoplasm. It is found in the golgi apparatus. Its subcellular location is the trans-Golgi network. In terms of biological role, plays a role in cytoplasmic pre-assembly of axonemal dynein. The sequence is that of Dynein axonemal assembly factor 6 from Mus musculus (Mouse).